Consider the following 102-residue polypeptide: Small ribosomal subunit protein uS10 (102 aa).

Belongs to the universal ribosomal protein uS10 family. Part of the 30S ribosomal subunit.

In terms of biological role, involved in the binding of tRNA to the ribosomes. In Streptococcus pneumoniae (strain Taiwan19F-14), this protein is Small ribosomal subunit protein uS10.